We begin with the raw amino-acid sequence, 224 residues long: C-&gt;U-editing enzyme APOBEC-2 (224 aa).

Positions 1–23 (MAQKEEAAEAAAPASQNGDDLEN) are disordered. Residues Glu60 and His98 each coordinate Zn(2+). The region spanning 64-169 (GRNKTFLCYV…PEVQAALKKL (106 aa)) is the CMP/dCMP-type deaminase domain. Glu100 functions as the Proton donor in the catalytic mechanism. 2 residues coordinate Zn(2+): Cys128 and Cys131.

Belongs to the cytidine and deoxycytidylate deaminase family. In terms of assembly, homotetramer. Zn(2+) is required as a cofactor. As to expression, expressed exclusively in heart and skeletal muscle.

The catalysed reaction is cytidine(6666) in apoB mRNA + H2O + H(+) = uridine(6666) in apoB mRNA + NH4(+). Its function is as follows. Probable C to U editing enzyme whose physiological substrate is not yet known. Does not display detectable apoB mRNA editing. Has a low intrinsic cytidine deaminase activity. May play a role in the epigenetic regulation of gene expression through the process of active DNA demethylation. The polypeptide is C-&gt;U-editing enzyme APOBEC-2 (Apobec2) (Mus musculus (Mouse)).